Reading from the N-terminus, the 291-residue chain is MRKSLLALLTLSLALLSFLITPSMALNSGGSPIPIYYNYYNYYSLNAEGFGFSFNNSNNWVETNFISITINLPSSLPNNYQINNAYSIVVGLSPYPVSNINIFNSPLEAYVELFSNPPNTYPNEIGFVVSYGSTVFYSYTTLYSSFAGTQLTITISYTGNGFGVQFSDSNGFSHSVSVSSVNFVPYGALILGSLIPNGNYYYYPVGNMLPNASVNFSYTISSFTIEGNPATSVDITTLGLEGNTAIYTSSSNWFKWVSGSVVITNAVAYTYTDLARIGGSAQINYTASQLY.

In terms of biological role, essential for virus function. This is an uncharacterized protein from Sulfolobus spindle-shape virus 1 (SSV1).